The following is a 250-amino-acid chain: UPF0758 protein RPB_0700 (250 aa).

The disordered stretch occupies residues 1–27; that stretch reads MVDPISNAAPPMPADSSERLDPPGFAE. An MPN domain is found at 128-250; the sequence is VLSSWSAVID…HASLKGLKLF (123 aa). 3 residues coordinate Zn(2+): His-199, His-201, and Asp-212. The JAMM motif signature appears at 199–212; the sequence is HNHPSGDPTPSQAD.

The protein belongs to the UPF0758 family.

The protein is UPF0758 protein RPB_0700 of Rhodopseudomonas palustris (strain HaA2).